The chain runs to 136 residues: Large ribosomal subunit protein uL16 (136 aa).

It belongs to the universal ribosomal protein uL16 family. As to quaternary structure, part of the 50S ribosomal subunit.

In terms of biological role, binds 23S rRNA and is also seen to make contacts with the A and possibly P site tRNAs. The polypeptide is Large ribosomal subunit protein uL16 (Proteus mirabilis (strain HI4320)).